Here is a 359-residue protein sequence, read N- to C-terminus: 3-dehydroquinate synthase (359 aa).

Residues 106 to 110 (GVVGD), 130 to 131 (TS), Lys143, and Lys152 contribute to the NAD(+) site. Residues Glu185, His246, and His262 each coordinate Zn(2+).

It belongs to the sugar phosphate cyclases superfamily. Dehydroquinate synthase family. NAD(+) is required as a cofactor. It depends on Co(2+) as a cofactor. Zn(2+) serves as cofactor.

The protein localises to the cytoplasm. The enzyme catalyses 7-phospho-2-dehydro-3-deoxy-D-arabino-heptonate = 3-dehydroquinate + phosphate. It participates in metabolic intermediate biosynthesis; chorismate biosynthesis; chorismate from D-erythrose 4-phosphate and phosphoenolpyruvate: step 2/7. In terms of biological role, catalyzes the conversion of 3-deoxy-D-arabino-heptulosonate 7-phosphate (DAHP) to dehydroquinate (DHQ). The chain is 3-dehydroquinate synthase from Lactiplantibacillus plantarum (strain ATCC BAA-793 / NCIMB 8826 / WCFS1) (Lactobacillus plantarum).